Here is a 263-residue protein sequence, read N- to C-terminus: HLA class II histocompatibility antigen, DM beta chain (263 aa).

The N-terminal stretch at 1–18 (MITFLPLLLGLSLGCTGA) is a signal peptide. The beta-1 stretch occupies residues 19–112 (GGFVAHVEST…PFWGSLTNRT (94 aa)). Residues 19-218 (GGFVAHVEST…PGLSPMQTLK (200 aa)) lie on the Lumenal side of the membrane. 2 disulfide bridges follow: Cys29/Cys97 and Cys43/Cys53. Residue Asn110 is glycosylated (N-linked (GlcNAc...) asparagine). Residues 113-207 (RPPSVQVAKT…GAPEPILRDW (95 aa)) form a beta-2 region. The Ig-like C1-type domain maps to 114–208 (PPSVQVAKTT…APEPILRDWT (95 aa)). Residues Cys135 and Cys192 are joined by a disulfide bond. The tract at residues 208 to 218 (TPGLSPMQTLK) is connecting peptide. The helical transmembrane segment at 219 to 239 (VSVSAVTLGLGLIIFSLGVIS) threads the bilayer. Topologically, residues 240-263 (WRRAGHSSYTPLPGSNYSEGWHIS) are cytoplasmic. Residues 248-251 (YTPL) carry the YXXZ motif motif.

Belongs to the MHC class II family. Heterodimer of an alpha chain (DMA) and a beta chain (DMB). Interacts with MHCII; this interaction mediates rapid selection of high-affinity peptides in a pH-dependent manner, with an optimum at pH 5.5.

It is found in the late endosome membrane. It localises to the lysosome membrane. Functionally, plays a critical role in catalyzing the release of class II-associated invariant chain peptide (CLIP) from newly synthesized MHC class II molecules and freeing the peptide binding site for acquisition of antigenic peptides. In B-cells, the interaction between HLA-DM and MHC class II molecules is regulated by HLA-DO. This chain is HLA class II histocompatibility antigen, DM beta chain (HLA-DMB), found in Homo sapiens (Human).